A 121-amino-acid polypeptide reads, in one-letter code: Ribonuclease P protein component (121 aa).

Belongs to the RnpA family. In terms of assembly, consists of a catalytic RNA component (M1 or rnpB) and a protein subunit.

The enzyme catalyses Endonucleolytic cleavage of RNA, removing 5'-extranucleotides from tRNA precursor.. RNaseP catalyzes the removal of the 5'-leader sequence from pre-tRNA to produce the mature 5'-terminus. It can also cleave other RNA substrates such as 4.5S RNA. The protein component plays an auxiliary but essential role in vivo by binding to the 5'-leader sequence and broadening the substrate specificity of the ribozyme. This is Ribonuclease P protein component from Alcanivorax borkumensis (strain ATCC 700651 / DSM 11573 / NCIMB 13689 / SK2).